Consider the following 112-residue polypeptide: T cell receptor alpha variable 9-1 (112 aa).

An N-terminal signal peptide occupies residues 1–20; sequence MNSSPGPAIALFLMFGGING. An Ig-like domain is found at 21-112; sequence DSVVQTEGQV…DSAVYFCALS (92 aa). N41 carries an N-linked (GlcNAc...) asparagine glycan. C42 and C109 form a disulfide bridge.

As to quaternary structure, alpha-beta TR is a heterodimer composed of an alpha and beta chain; disulfide-linked. The alpha-beta TR is associated with the transmembrane signaling CD3 coreceptor proteins to form the TR-CD3 (TcR or TCR). The assembly of alpha-beta TR heterodimers with CD3 occurs in the endoplasmic reticulum where a single alpha-beta TR heterodimer associates with one CD3D-CD3E heterodimer, one CD3G-CD3E heterodimer and one CD247 homodimer forming a stable octameric structure. CD3D-CD3E and CD3G-CD3E heterodimers preferentially associate with TR alpha and TR beta chains, respectively. The association of the CD247 homodimer is the last step of TcR assembly in the endoplasmic reticulum and is required for transport to the cell surface.

The protein localises to the cell membrane. Its function is as follows. V region of the variable domain of T cell receptor (TR) alpha chain that participates in the antigen recognition. Alpha-beta T cell receptors are antigen specific receptors which are essential to the immune response and are present on the cell surface of T lymphocytes. Recognize peptide-major histocompatibility (MH) (pMH) complexes that are displayed by antigen presenting cells (APC), a prerequisite for efficient T cell adaptive immunity against pathogens. Binding of alpha-beta TR to pMH complex initiates TR-CD3 clustering on the cell surface and intracellular activation of LCK that phosphorylates the ITAM motifs of CD3G, CD3D, CD3E and CD247 enabling the recruitment of ZAP70. In turn ZAP70 phosphorylates LAT, which recruits numerous signaling molecules to form the LAT signalosome. The LAT signalosome propagates signal branching to three major signaling pathways, the calcium, the mitogen-activated protein kinase (MAPK) kinase and the nuclear factor NF-kappa-B (NF-kB) pathways, leading to the mobilization of transcription factors that are critical for gene expression and essential for T cell growth and differentiation. The T cell repertoire is generated in the thymus, by V-(D)-J rearrangement. This repertoire is then shaped by intrathymic selection events to generate a peripheral T cell pool of self-MH restricted, non-autoaggressive T cells. Post-thymic interaction of alpha-beta TR with the pMH complexes shapes TR structural and functional avidity. The sequence is that of T cell receptor alpha variable 9-1 from Homo sapiens (Human).